A 962-amino-acid chain; its full sequence is Glycine dehydrogenase (decarboxylating) (962 aa).

An N6-(pyridoxal phosphate)lysine modification is found at lysine 709.

The protein belongs to the GcvP family. The glycine cleavage system is composed of four proteins: P, T, L and H. Pyridoxal 5'-phosphate serves as cofactor.

It catalyses the reaction N(6)-[(R)-lipoyl]-L-lysyl-[glycine-cleavage complex H protein] + glycine + H(+) = N(6)-[(R)-S(8)-aminomethyldihydrolipoyl]-L-lysyl-[glycine-cleavage complex H protein] + CO2. Its function is as follows. The glycine cleavage system catalyzes the degradation of glycine. The P protein binds the alpha-amino group of glycine through its pyridoxal phosphate cofactor; CO(2) is released and the remaining methylamine moiety is then transferred to the lipoamide cofactor of the H protein. This is Glycine dehydrogenase (decarboxylating) from Shewanella sp. (strain MR-4).